We begin with the raw amino-acid sequence, 465 residues long: Cysteine--tRNA ligase (465 aa).

Cysteine 30 is a binding site for Zn(2+). The 'HIGH' region signature appears at 32–42 (ITVYDYCHVGH). Positions 214, 239, and 243 each coordinate Zn(2+). Positions 271–275 (KMSKS) match the 'KMSKS' region motif. Residue lysine 274 participates in ATP binding.

The protein belongs to the class-I aminoacyl-tRNA synthetase family. In terms of assembly, monomer. Zn(2+) is required as a cofactor.

The protein localises to the cytoplasm. It carries out the reaction tRNA(Cys) + L-cysteine + ATP = L-cysteinyl-tRNA(Cys) + AMP + diphosphate. This chain is Cysteine--tRNA ligase, found in Burkholderia cenocepacia (strain ATCC BAA-245 / DSM 16553 / LMG 16656 / NCTC 13227 / J2315 / CF5610) (Burkholderia cepacia (strain J2315)).